The sequence spans 418 residues: MTDIERDVRKVAERARDAAADLAPLSRDAKDEALTAVADALRERTEEIVAANAKDVAQARENGISEAMIDRLTLTPARITAIADAVHEIVELPDPVGEVVRGKTLPNGLELRQIRVPLGVIGIIYEGRPNVTVDAAALCLKSGNAVLLRGSSSAYSSNTVLTDVIRQALASTRVPVDAVQMVPGKSRESVKHLMRARGLVDVLIPRGGASLIQTVVNESTIPVIETGTGNCHVYVDEAADLDQALKIVLNSKTQRCSVCNASETLLVHAGIADAFLPRALAELREAGVTIHGDERVRSYDSSVVPATEEDWATEYLSLDLAVRVVDSLDEAVAHIRAYSSAHTEAIITDSQAAARRFVSLVDSAAVMVNASTRFTDGGEFGFGAEIGISTQKLHARGPMGLPELTTTKYVVTGEGHVR.

The protein belongs to the gamma-glutamyl phosphate reductase family.

The protein localises to the cytoplasm. It catalyses the reaction L-glutamate 5-semialdehyde + phosphate + NADP(+) = L-glutamyl 5-phosphate + NADPH + H(+). The protein operates within amino-acid biosynthesis; L-proline biosynthesis; L-glutamate 5-semialdehyde from L-glutamate: step 2/2. In terms of biological role, catalyzes the NADPH-dependent reduction of L-glutamate 5-phosphate into L-glutamate 5-semialdehyde and phosphate. The product spontaneously undergoes cyclization to form 1-pyrroline-5-carboxylate. The chain is Gamma-glutamyl phosphate reductase from Thermobifida fusca (strain YX).